The following is a 416-amino-acid chain: CapZ-interacting protein (416 aa).

Disordered stretches follow at residues 1–84 (MEER…KSSP) and 98–416 (AALL…DTKM). Positions 8–20 (TNANVDNSASPSV) are enriched in polar residues. Position 17 is a phosphoserine (serine 17). A Phosphoserine; by MAPK8; in vitro modification is found at serine 68. At serine 82 the chain carries Phosphoserine. The residue at position 83 (serine 83) is a Phosphoserine; by MAPK8; in vitro. Serine 105 carries the post-translational modification Phosphoserine. At serine 108 the chain carries Phosphoserine; by MAPK12 and MAPK13. Phosphoserine occurs at positions 116, 120, and 123. Threonine 124 bears the Phosphothreonine mark. Phosphoserine occurs at positions 126, 127, 135, and 143. Residues 159 to 176 (VRTRGSIKRRPPSRRFRR) are compositionally biased toward basic residues. Position 177 is a phosphoserine (serine 177). Serine 179 is modified (phosphoserine; by MAPKAPK2 and MAPKAPK3). Serine 216 bears the Phosphoserine; by MAPK8; in vitro mark. The 104-residue stretch at 227 to 330 (GVRTLGPAEK…RVQNEEVGPE (104 aa)) folds into the RCSD domain. Serine 244 is modified (phosphoserine; by MAPKAPK2 or MAPKAPK3; in vitro). Over residues 244–273 (SRTEKQEEDRATEEAKNGEKARRSSEEVDG) the composition is skewed to basic and acidic residues. Residues serine 267, serine 268, serine 284, serine 298, and serine 333 each carry the phosphoserine modification. Basic and acidic residues predominate over residues 292-349 (AENRCGSPREEKPAGEEAEMEKATEVKGERVQNEEVGPEHDSQETKKLEEGAAVKETP). Phosphothreonine is present on threonine 336. Serine 351 is subject to Phosphoserine. Residues 360–372 (DVPKQEKGKEKQQ) show a composition bias toward basic and acidic residues. Positions 382-397 (SPQTGPAQLETSSEVQ) are enriched in polar residues.

As to quaternary structure, interacts with CAPZA2 and CAPZB. Post-translationally, dephosphorylation results in its dissociation from CAPZA2. As to expression, highly expressed in skeletal muscle and more weakly in cardiac muscle. Also expressed in several lymphoid organs, including spleen, thymus, peripheral blood leukocytes, lymph node and bone marrow.

In terms of biological role, stress-induced phosphorylation of CAPZIP may regulate the ability of F-actin-capping protein to remodel actin filament assembly. The polypeptide is CapZ-interacting protein (RCSD1) (Homo sapiens (Human)).